Here is a 313-residue protein sequence, read N- to C-terminus: Ribosomal protein L11 methyltransferase (313 aa).

S-adenosyl-L-methionine is bound by residues threonine 164, glycine 185, aspartate 207, and asparagine 249.

This sequence belongs to the methyltransferase superfamily. PrmA family.

The protein localises to the cytoplasm. It carries out the reaction L-lysyl-[protein] + 3 S-adenosyl-L-methionine = N(6),N(6),N(6)-trimethyl-L-lysyl-[protein] + 3 S-adenosyl-L-homocysteine + 3 H(+). Methylates ribosomal protein L11. The chain is Ribosomal protein L11 methyltransferase from Clostridium botulinum (strain Eklund 17B / Type B).